The primary structure comprises 427 residues: MSIYAVIGTQWGDEGKGKIIDFLSSKIDYVVRFNGGNNAGHTIVVNNKKFIFNLLPSGVLQGAKCILGPGVVIDPLILIKELEALKHNNIKTEIFISDKAHIIMPYHIKLDELNEQKKGVYKIGTTKRGIGPCYADKINRTGIRAVDLLDIKIFERKLKINLDEKNEIIEKIYNHKPFNYDDILSKYKKCIAILQYAITNTEEILNQAINSGKIILIEGAQGTMLDIEHGTFPFVTSSNTLITATTGCGIPISKIKEKIGIVKAFSSRVGSGPFVTEILGPIGDKIREKGQEYGSTTNRPRRIGWLDLLTIKKSISLNELNHLALTKLDILNNIEDLKICTAYEFKGKIYDYIPTSCEILENVKPVYKVFKGFKQNIRNISHYEDLPIEAKEYIEFIEREVGVQISILSLGAEREKTIFRNQKWINI.

GTP-binding positions include 12 to 18 (GDEGKGK) and 40 to 42 (GHT). Aspartate 13 functions as the Proton acceptor in the catalytic mechanism. Mg(2+) contacts are provided by aspartate 13 and glycine 40. Residues 13-16 (DEGK), 38-41 (NAGH), threonine 126, arginine 140, glutamine 221, threonine 236, and arginine 299 contribute to the IMP site. The Proton donor role is filled by histidine 41. Position 295–301 (295–301 (STTNRPR)) interacts with substrate. GTP contacts are provided by residues arginine 301, 327-329 (KLD), and 409-411 (SLG).

It belongs to the adenylosuccinate synthetase family. Homodimer. It depends on Mg(2+) as a cofactor.

Its subcellular location is the cytoplasm. The enzyme catalyses IMP + L-aspartate + GTP = N(6)-(1,2-dicarboxyethyl)-AMP + GDP + phosphate + 2 H(+). It participates in purine metabolism; AMP biosynthesis via de novo pathway; AMP from IMP: step 1/2. Plays an important role in the de novo pathway of purine nucleotide biosynthesis. Catalyzes the first committed step in the biosynthesis of AMP from IMP. The sequence is that of Adenylosuccinate synthetase from Borrelia turicatae (strain 91E135).